Consider the following 227-residue polypeptide: Large ribosomal subunit protein uL3 (227 aa).

Position 151 is an N5-methylglutamine (Q151).

Belongs to the universal ribosomal protein uL3 family. As to quaternary structure, part of the 50S ribosomal subunit. Forms a cluster with proteins L14 and L19. Post-translationally, methylated by PrmB.

One of the primary rRNA binding proteins, it binds directly near the 3'-end of the 23S rRNA, where it nucleates assembly of the 50S subunit. The sequence is that of Large ribosomal subunit protein uL3 from Gluconobacter oxydans (strain 621H) (Gluconobacter suboxydans).